Reading from the N-terminus, the 974-residue chain is Short transient receptor potential channel 4 (974 aa).

Residues 1 to 324 (MAQFYYKRNV…YDEFPGWRRR (324 aa)) are Cytoplasmic-facing. ANK repeat units follow at residues 29–60 (LSPS…IYFK), 71–93 (RTAL…LSFN), 96–118 (VGDA…LLNH), and 141–165 (PDIT…VQKG). A multimerization domain region spans residues 87-172 (ELLLSFNVYV…QKGVSVPRPH (86 aa)). Residues H172, C176, C178, and C181 each coordinate Zn(2+). The stretch at 223–260 (LSWELQELSKVENEFKSEYEELSRQCKQFAKDLLDQTR) forms a coiled coil. The interval 254–304 (DLLDQTRSSRELEIILNYRDDNSLIEEQSGNDLARLKLAIKYRQKEFVAQP) is multimerization domain. The discontinuously helical intramembrane region spans 325–359 (HWAVKMVTCFIIGLLFPVFSVCYLIAPKSPLGLFI). At 360-362 (RKP) the chain is on the cytoplasmic side. The chain crosses the membrane as a helical span at residues 363–383 (FIKFICHTASYLTFLFLLLLA). The Extracellular segment spans residues 384–403 (SQHIDRSDLNRQGPPPTIVE). The helical transmembrane segment at 404-418 (WMILPWVLGFIWGEI) threads the bilayer. Positions 417, 420, 435, and 438 each coordinate Ca(2+). Topologically, residues 419-432 (KQMWDGGLQDYIHD) are cytoplasmic. A helical membrane pass occupies residues 433 to 453 (WWNLMDFVMNSLYLATISLKI). The Extracellular segment spans residues 454–475 (VAFVKYSALNPRESWDMWHPTL). Residues 476–498 (VAEALFAIANIFSSLRLISLFTA) form a helical membrane-spanning segment. Over 499–511 (NSHLGPLQISLGR) the chain is Cytoplasmic. The helical transmembrane segment at 512 to 534 (MLLDILKFLFIYCLVLLAFANGL) threads the bilayer. The Extracellular segment spans residues 535–599 (NQLYFYYEET…HEFTEFVGAT (65 aa)). Cysteines 549 and 554 form a disulfide. A helical membrane pass occupies residues 600-620 (MFGTYNVISLVVLLNMLIAMM). The tract at residues 615–974 (MLIAMMNNSY…AHEDYVTTRL (360 aa)) is interaction with ITPR1, ITPR2 and ITPR3. The Cytoplasmic segment spans residues 621–974 (NNSYQLIADH…AHEDYVTTRL (354 aa)). Positions 765 to 787 (ANAASSADSDEKSQSEGNGKDKR) are disordered. A compositionally biased stretch (basic and acidic residues) spans 773 to 784 (SDEKSQSEGNGK). Phosphotyrosine; by FYN is present on residues Y956 and Y969. Positions 972–974 (TRL) are PDZ-binding domain.

Belongs to the transient receptor (TC 1.A.4) family. STrpC subfamily. TRPC4 sub-subfamily. As to quaternary structure, homotetramer. Heterotetramer with TRPC1 and/or TRPC5. Forms a heteromeric ion channel with TRPC1, with a 1:3 TRPC1:TRPC4 stoichiometry. Interacts with TRPC4AP. Isoform alpha but not isoform beta interacts with ITPR1, ITPR2 and ITPR3. Interacts with NHERF1. Interacts with MX1 and RNF24. Interacts (via CIRB domain) with SESTD1 (via the spectrin 1 repeat) and SPTBN5 (via C-terminus). Interacts with CDH5 and CTNNB1. Interacts (via protein 4.1-binding domain) with EPB41L2. Interacts with PLSCR1. In terms of tissue distribution, abundantly expressed in brain (hippocampal CA1 pyramidal neurons, dentate gyrus granule cells, and cerebral cortical neurons, and in the septal nuclei and the mitral layer of olfactory bulb). Lower levels are detected in other tissues.

It is found in the cell membrane. The catalysed reaction is Ca(2+)(in) = Ca(2+)(out). The enzyme catalyses Na(+)(in) = Na(+)(out). It catalyses the reaction Li(+)(in) = Li(+)(out). It carries out the reaction Cs(+)(in) = Cs(+)(out). Its activity is regulated as follows. May be operated by a phosphatidylinositol second messenger system activated by receptor tyrosine kinases or G-protein coupled receptors. May be activated by intracellular calcium store depletion. In terms of biological role, forms a receptor-activated non-selective calcium permeant cation channel. Acts as a cell-cell contact-dependent endothelial calcium entry channel. Forms a homomeric ion channel or a heteromeric ion channel with TRPC1; the heteromeric ion channel has reduced calcium permeability compared to the homomeric channel. Also permeable to monovalent ions including sodium, lithium and cesium ions. This chain is Short transient receptor potential channel 4 (Trpc4), found in Mus musculus (Mouse).